A 496-amino-acid polypeptide reads, in one-letter code: MFS transporter cpaT (496 aa).

The segment at 1 to 45 (MGHQEEPPRICKTPSGHEQGEGPAEKTSKPSTEEVGWDGPTDPAR) is disordered. Residues 18–32 (EQGEGPAEKTSKPST) are compositionally biased toward basic and acidic residues. An N-linked (GlcNAc...) asparagine glycan is attached at N48. Residues 58 to 78 (MGIISYLTFLTPLTSSIVAPA) traverse the membrane as a helical segment. N90 carries N-linked (GlcNAc...) asparagine glycosylation. The next 5 helical transmembrane spans lie at 93 to 113 (LASFVVSIYLVGFAVGPLFLA), 130 to 150 (FIFTIWNIAGAVAPNVGALLV), 154 to 174 (FAGISGSGPVTLGAGSVADMF), 180 to 200 (GVAMSLYGLGPLLGPVIGPIA), and 212 to 232 (WVFWLLAIVSGVAVILVLFVL). N-linked (GlcNAc...) asparagine glycosylation is present at N252. Transmembrane regions (helical) follow at residues 288–308 (VALFSLYTGVVFGYLYLLFTT), 325–345 (GLVYIGIGVGALIGISCFGAL), 367–387 (LPPLIPGSFLIPIGLFWYGWS), 395–415 (IMPIIGLGWVGCGMIATLLPI), 427–449 (AASAIAANTVVRSIVGAFLPLAG), and 463–483 (SLLGFVALGLLPVPVVFYFYG).

The protein belongs to the major facilitator superfamily.

The protein localises to the membrane. MFS transporter; part of the gene cluster that mediates the biosynthesis of the fungal neurotoxin cyclopiazonic acid (CPA), a nanomolar inhibitor of Ca(2+)-ATPase with a unique pentacyclic indole tetramic acid scaffold. The protein is MFS transporter cpaT of Aspergillus oryzae (Yellow koji mold).